A 274-amino-acid chain; its full sequence is NAD-dependent protein deacylase (274 aa).

The Deacetylase sirtuin-type domain occupies 4–274; it reads CLLPSSDMDA…GELLPKALAP (271 aa). Residue 29–48 coordinates NAD(+); sequence GAGVSAESGVPTFRGAGGLW. Substrate contacts are provided by Tyr-73 and Arg-76. 111-114 serves as a coordination point for NAD(+); that stretch reads QNID. Residue His-129 is the Proton acceptor of the active site. 4 residues coordinate Zn(2+): Cys-137, Cys-140, Cys-178, and Cys-183. Residues 220–222, 246–248, and Cys-264 each bind NAD(+); these read GTS and NME.

This sequence belongs to the sirtuin family. Class III subfamily. Zn(2+) is required as a cofactor.

It is found in the mitochondrion. It catalyses the reaction N(6)-malonyl-L-lysyl-[protein] + NAD(+) + H2O = 2''-O-malonyl-ADP-D-ribose + nicotinamide + L-lysyl-[protein]. It carries out the reaction N(6)-succinyl-L-lysyl-[protein] + NAD(+) + H2O = 2''-O-succinyl-ADP-D-ribose + nicotinamide + L-lysyl-[protein]. The catalysed reaction is N(6)-glutaryl-L-lysyl-[protein] + NAD(+) + H2O = 2''-O-glutaryl-ADP-D-ribose + nicotinamide + L-lysyl-[protein]. In terms of biological role, NAD-dependent lysine demalonylase, desuccinylase and deglutarylase that specifically removes malonyl, succinyl and glutaryl groups on target proteins. Has weak NAD-dependent protein deacetylase activity; however this activity may not be physiologically relevant in vivo. The polypeptide is NAD-dependent protein deacylase (Daphnia pulex (Water flea)).